The sequence spans 193 residues: MEQDIYSNGSDHMERMLLFAFLAESSGCEFQEQLPSLQSQGVLCSVKDALCYDSDGELQTDGNRSGHLQNGELVPDPEVNEAIVRTIAAQLAEIGDQLDKQIKAKVVNDLVQHFLNENLPREEITRCLSQAVEGLARAIPSDLEQEKAMLVLAMLLTKKVANQMPSLLQRVFSTTVNYISQHFHNYIVRMLRE.

Residues 87–101 carry the BH3 motif; that stretch reads IAAQLAEIGDQLDKQ.

As to quaternary structure, forms heterodimers either with the pro-apoptotic protein BAX or the anti-apoptotic protein Bcl-2.

It is found in the cytoplasm. The protein localises to the mitochondrion outer membrane. In terms of biological role, induces caspases and apoptosis. Counters the protective effect of Bcl-2. This is BH3-interacting domain death agonist (BID) from Gallus gallus (Chicken).